The sequence spans 315 residues: Diacylglycerol kinase (315 aa).

One can recognise a DAGKc domain in the interval 1-132 (MRKRARIIYN…VDIGKMNNRY (132 aa)). ATP contacts are provided by residues 10–14 (NPTSG), threonine 41, 67–73 (GDGTLNE), and threonine 94. Positions 213, 216, and 218 each coordinate Mg(2+). Glutamate 273 serves as the catalytic Proton acceptor.

The protein belongs to the diacylglycerol/lipid kinase family. Homodimer. Mg(2+) serves as cofactor.

It carries out the reaction a 1,2-diacyl-sn-glycerol + ATP = a 1,2-diacyl-sn-glycero-3-phosphate + ADP + H(+). Catalyzes the phosphorylation of diacylglycerol (DAG) into phosphatidic acid. Is a key enzyme involved in the production of lipoteichoic acid by reintroducing DAG formed from the breakdown of membrane phospholipids into the phosphatidylglycerol biosynthetic pathway. This chain is Diacylglycerol kinase (dagK), found in Staphylococcus aureus (strain MRSA252).